The following is a 204-amino-acid chain: Viral interleukin-6 homolog (204 aa).

An N-terminal signal peptide occupies residues 1 to 22; sequence MRWFKLWSILLVGSLLVSGTRG.

Belongs to the IL-6 superfamily. As to quaternary structure, interacts with host IL6ST.

Its function is as follows. Initiates signal transduction through binding to interleukin-6 receptor subunit beta IL6ST, independently of the cognate IL6 receptor IL6R. In infected primary effusion lymphoma cells, promotes proliferation of cells, protects them from apoptosis, and promotes immune evasion of interferon activity. Also drives blood to lymphatic endothelial cell differentiation. The protein is Viral interleukin-6 homolog (K2) of Homo sapiens (Human).